A 620-amino-acid polypeptide reads, in one-letter code: Chaperone protein HscA homolog (620 aa).

It belongs to the heat shock protein 70 family.

Functionally, chaperone involved in the maturation of iron-sulfur cluster-containing proteins. Has a low intrinsic ATPase activity which is markedly stimulated by HscB. The protein is Chaperone protein HscA homolog of Acinetobacter baylyi (strain ATCC 33305 / BD413 / ADP1).